The primary structure comprises 142 residues: Transcriptional regulator MraZ (142 aa).

SpoVT-AbrB domains follow at residues 5 to 47 and 76 to 119; these read EYPY…PLAS and ANKA…NPGR.

This sequence belongs to the MraZ family. In terms of assembly, forms oligomers.

Its subcellular location is the cytoplasm. The protein localises to the nucleoid. This is Transcriptional regulator MraZ from Deinococcus deserti (strain DSM 17065 / CIP 109153 / LMG 22923 / VCD115).